Here is a 35-residue protein sequence, read N- to C-terminus: Hemocyanin A chain (35 aa).

This sequence belongs to the tyrosinase family. Hemocyanin subfamily. In terms of tissue distribution, hemolymph.

Its subcellular location is the secreted. The protein localises to the extracellular space. Hemocyanins are copper-containing oxygen carriers occurring freely dissolved in the hemolymph of many mollusks and arthropods. This Cherax destructor (Common yabby crayfish) protein is Hemocyanin A chain.